Here is a 452-residue protein sequence, read N- to C-terminus: Translation initiation factor eIF2B subunit gamma (452 aa).

Met1 carries the post-translational modification N-acetylmethionine. Ser260 carries the phosphoserine modification.

It belongs to the eIF-2B gamma/epsilon subunits family. As to quaternary structure, component of the translation initiation factor 2B (eIF2B) complex which is a heterodecamer of two sets of five different subunits: alpha, beta, gamma, delta and epsilon. Subunits alpha, beta and delta comprise a regulatory subcomplex and subunits epsilon and gamma comprise a catalytic subcomplex. Within the complex, the hexameric regulatory complex resides at the center, with the two heterodimeric catalytic subcomplexes bound on opposite sides.

Its subcellular location is the cytoplasm. It is found in the cytosol. With respect to regulation, activated by the chemical integrated stress response (ISR) inhibitor ISRIB which stimulates guanine nucleotide exchange factor activity for both phosphorylated and unphosphorylated eIF2. Acts as a component of the translation initiation factor 2B (eIF2B) complex, which catalyzes the exchange of GDP for GTP on the eukaryotic initiation factor 2 (eIF2) complex gamma subunit. Its guanine nucleotide exchange factor activity is repressed when bound to eIF2 complex phosphorylated on the alpha subunit, thereby limiting the amount of methionyl-initiator methionine tRNA available to the ribosome and consequently global translation is repressed. This chain is Translation initiation factor eIF2B subunit gamma (EIF2B3), found in Homo sapiens (Human).